Reading from the N-terminus, the 495-residue chain is Ankyrin repeat domain-containing protein 34A (495 aa).

4 ANK repeats span residues 4–33, 37–72, 76–106, and 110–139; these read TEGH…YVNE, QGET…DPNI, LGRT…DPSV, and AGAS…AKGT. Q15 bears the N5-methylglutamine mark. 2 stretches are compositionally biased toward polar residues: residues 147-162 and 180-191; these read DTSP…YLNS and VCTSPSEVQLQT. The disordered stretch occupies residues 147 to 495; the sequence is DTSPSGTKKT…SLGGPGEPGR (349 aa). The segment covering 203–213 has biased composition (basic and acidic residues); it reads AQEEEEKRDVF. A compositionally biased stretch (pro residues) spans 223–232; that stretch reads DPSPSEPLPK. Over residues 233–242 the composition is skewed to basic residues; it reads PPRHPPKPLK. Phosphothreonine is present on T315. A compositionally biased stretch (polar residues) spans 375–385; the sequence is SVSSPRQSQES. A compositionally biased stretch (basic residues) spans 462–472; that stretch reads RTKRKLVRRHS. Residues 485 to 495 show a composition bias toward gly residues; that stretch reads QSLGGPGEPGR.

Belongs to the ANKRD34 family. In terms of processing, methylated at Gln-15 by N6AMT1.

This chain is Ankyrin repeat domain-containing protein 34A (Ankrd34a), found in Rattus norvegicus (Rat).